A 129-amino-acid chain; its full sequence is Procyclic form-specific polypeptide A-beta (129 aa).

The first 27 residues, 1–27, serve as a signal peptide directing secretion; sequence MAPRSLYLLAVLLFSANLFAGVGFAAA. The interval 27–111 is disordered; the sequence is AAEGPEDKGL…PEPEPGAATL (85 aa). Residues 53 to 104 are compositionally biased toward acidic residues; the sequence is DDTNGTDPDPEPEPEPEPEPEPEPEPEPEPEPEPEPEPEPEPEPEPEPEPEP. Residue Asn56 is glycosylated (N-linked (GlcNAc...) asparagine). 24 tandem repeats follow at residues 59–60, 61–62, 63–64, 65–66, 67–68, 69–70, 71–72, 73–74, 75–76, 77–78, 79–80, 81–82, 83–84, 85–86, 87–88, 89–90, 91–92, 93–94, 95–96, 97–98, 99–100, 101–102, 103–104, and 105–106. Positions 59-106 are 24 X 2 AA tandem repeats of [DE]-P; the sequence is DPDPEPEPEPEPEPEPEPEPEPEPEPEPEPEPEPEPEPEPEPEPEPEP. Residue Gly107 is the site of GPI-anchor amidated glycine attachment. The propeptide occupies 108–129; the sequence is AATLKSVALPFAIAAVGLVAAF.

It is found in the cell membrane. Its function is as follows. Major surface antigen of procyclic forms. The sequence is that of Procyclic form-specific polypeptide A-beta (PARPA-BETA) from Trypanosoma brucei brucei.